Reading from the N-terminus, the 834-residue chain is Periplasmic nitrate reductase (834 aa).

Positions methionine 1–alanine 29 form a signal peptide, tat-type signal. The 57-residue stretch at leucine 41–aspartate 97 folds into the 4Fe-4S Mo/W bis-MGD-type domain. Positions 48, 51, 55, and 83 each coordinate [4Fe-4S] cluster. Mo-bis(molybdopterin guanine dinucleotide) is bound by residues lysine 85, glutamine 152, asparagine 177, cysteine 181, tryptophan 214–methionine 221, serine 245–histidine 249, glutamine 264–aspartate 266, methionine 375, glutamine 379, asparagine 485, serine 511–aspartate 512, lysine 534, aspartate 561, and threonine 721–threonine 730. A substrate-binding site is contributed by phenylalanine 797. Asparagine 805 and lysine 822 together coordinate Mo-bis(molybdopterin guanine dinucleotide).

The protein belongs to the prokaryotic molybdopterin-containing oxidoreductase family. NasA/NapA/NarB subfamily. As to quaternary structure, component of the periplasmic nitrate reductase NapAB complex composed of NapA and NapB. It depends on [4Fe-4S] cluster as a cofactor. Mo-bis(molybdopterin guanine dinucleotide) is required as a cofactor. Predicted to be exported by the Tat system. The position of the signal peptide cleavage has not been experimentally proven.

The protein localises to the periplasm. It carries out the reaction 2 Fe(II)-[cytochrome] + nitrate + 2 H(+) = 2 Fe(III)-[cytochrome] + nitrite + H2O. Functionally, catalytic subunit of the periplasmic nitrate reductase complex NapAB. Receives electrons from NapB and catalyzes the reduction of nitrate to nitrite. This chain is Periplasmic nitrate reductase, found in Stutzerimonas stutzeri (Pseudomonas stutzeri).